A 91-amino-acid chain; its full sequence is Islet amyloid polypeptide (91 aa).

Residues 1–22 (MCLLQLPVVLLLLSAALNTLKA) form the signal peptide. Positions 23 to 34 (TPIASDTDHRVD) are excised as a propeptide. The cysteines at positions 38 and 43 are disulfide-linked. Tyr-73 carries the tyrosine amide modification. Residues 77–91 (NAEVVDVELLHYLPL) constitute a propeptide that is removed on maturation.

This sequence belongs to the calcitonin family. As to quaternary structure, can form homodimers. Interacts with IDE and INS. Interaction with INS inhibits homodimerization and fibril formation.

It is found in the secreted. Functionally, amylin/IAPP is a glucoregulatory peptide hormone that plays an important role in the regulation of energy homeostasis. Selectively inhibits insulin-stimulated glucose utilization and glycogen deposition in muscle, while not affecting adipocyte glucose metabolism. IAPP function is mediated by the CALCR-RAMPs (AMYRs) receptor complexes. Amylin can also bind CALCR receptor in the absence of RAMPs, although it is more selective for AMYRs. The chain is Islet amyloid polypeptide (IAPP) from Octodon degus (Degu).